Consider the following 499-residue polypeptide: Glycerol kinase (499 aa).

T13 provides a ligand contact to ADP. ATP contacts are provided by T13, T14, and S15. T13 provides a ligand contact to sn-glycerol 3-phosphate. R17 contributes to the ADP binding site. Residues R83, E84, Y135, and D244 each contribute to the sn-glycerol 3-phosphate site. Glycerol is bound by residues R83, E84, Y135, D244, and Q245. Residues T266 and G309 each coordinate ADP. Residues T266, G309, Q313, and G410 each contribute to the ATP site. Positions 410 and 414 each coordinate ADP.

It belongs to the FGGY kinase family. As to quaternary structure, homotetramer and homodimer (in equilibrium).

It catalyses the reaction glycerol + ATP = sn-glycerol 3-phosphate + ADP + H(+). Its pathway is polyol metabolism; glycerol degradation via glycerol kinase pathway; sn-glycerol 3-phosphate from glycerol: step 1/1. Its activity is regulated as follows. Activated by phosphorylation and inhibited by fructose 1,6-bisphosphate (FBP). Key enzyme in the regulation of glycerol uptake and metabolism. Catalyzes the phosphorylation of glycerol to yield sn-glycerol 3-phosphate. In Brevibacillus brevis (strain 47 / JCM 6285 / NBRC 100599), this protein is Glycerol kinase.